The sequence spans 441 residues: UBX domain-containing protein 6 (441 aa).

The segment at 1–10 (MKKFFQEIKA) is mediates interaction with LMAN1. Disordered stretches follow at residues 12–57 (IKFK…MAAA), 62–81 (RLEQ…SIRN), and 86–113 (ELRA…EEGS). Residues 27 to 36 (VGEKAPKEKP) are compositionally biased toward basic and acidic residues. The interval 51 to 63 (EAQMAAAAALARL) is VCP/p97-interacting motif (VIM). The region spanning 175–244 (VDTIAKYLDN…GPEEFYVLSE (70 aa)) is the PUB domain. The UBX domain maps to 332–408 (RKYTYTLLRV…GLVPSALLTF (77 aa)).

Interacts with VCP through the PUB domain (via C-terminus) and VIM motif (via N-terminus); the interaction is direct. Forms a ternary complex with CAV1 and VCP. Interacts with SYVN1. Interacts with HERPUD1. Interacts with VCPKMT. May interact with DERL1. Interacts with PLAA, VCP and YOD1; may form a complex involved in macroautophagy. Interacts with LMAN1.

It is found in the cytoplasm. The protein resides in the cytosol. The protein localises to the membrane. Its subcellular location is the nucleus. It localises to the cytoskeleton. It is found in the microtubule organizing center. The protein resides in the centrosome. The protein localises to the early endosome membrane. Its subcellular location is the late endosome membrane. It localises to the lysosome membrane. Functionally, may negatively regulate the ATPase activity of VCP, an ATP-driven segregase that associates with different cofactors to control a wide variety of cellular processes. As a cofactor of VCP, it may play a role in the transport of CAV1 to lysosomes for degradation. It may also play a role in endoplasmic reticulum-associated degradation (ERAD) of misfolded proteins. Together with VCP and other cofactors, it may play a role in macroautophagy, regulating for instance the clearance of damaged lysosomes. This chain is UBX domain-containing protein 6, found in Bos taurus (Bovine).